Reading from the N-terminus, the 161-residue chain is Phosphopantetheine adenylyltransferase (161 aa).

Substrate is bound at residue Thr10. ATP-binding positions include 10-11 (TF) and His18. Substrate is bound by residues Lys42, Met74, and Arg88. Residues 89 to 91 (GLR), Glu99, and 124 to 130 (WSFISSS) each bind ATP.

It belongs to the bacterial CoaD family. As to quaternary structure, homohexamer. The cofactor is Mg(2+).

The protein localises to the cytoplasm. It catalyses the reaction (R)-4'-phosphopantetheine + ATP + H(+) = 3'-dephospho-CoA + diphosphate. The protein operates within cofactor biosynthesis; coenzyme A biosynthesis; CoA from (R)-pantothenate: step 4/5. Its function is as follows. Reversibly transfers an adenylyl group from ATP to 4'-phosphopantetheine, yielding dephospho-CoA (dPCoA) and pyrophosphate. This chain is Phosphopantetheine adenylyltransferase, found in Serratia marcescens.